A 353-amino-acid polypeptide reads, in one-letter code: Methylthioribose-1-phosphate isomerase (353 aa).

Residues 51–53, Arg94, and Gln199 contribute to the substrate site; that span reads RGA. Catalysis depends on Asp240, which acts as the Proton donor. 250-251 is a substrate binding site; that stretch reads NK.

The protein belongs to the eIF-2B alpha/beta/delta subunits family. MtnA subfamily. Homodimer.

It catalyses the reaction 5-(methylsulfanyl)-alpha-D-ribose 1-phosphate = 5-(methylsulfanyl)-D-ribulose 1-phosphate. It participates in amino-acid biosynthesis; L-methionine biosynthesis via salvage pathway; L-methionine from S-methyl-5-thio-alpha-D-ribose 1-phosphate: step 1/6. Functionally, catalyzes the interconversion of methylthioribose-1-phosphate (MTR-1-P) into methylthioribulose-1-phosphate (MTRu-1-P). This is Methylthioribose-1-phosphate isomerase from Bacillus pumilus (strain SAFR-032).